A 267-amino-acid chain; its full sequence is Orotidine 5'-phosphate decarboxylase (267 aa).

Substrate-binding positions include aspartate 37, 59-61 (KTH), 91-100 (DRKFADIGNT), tyrosine 217, and arginine 235. Residue lysine 93 is the Proton donor of the active site.

The protein belongs to the OMP decarboxylase family.

It catalyses the reaction orotidine 5'-phosphate + H(+) = UMP + CO2. It participates in pyrimidine metabolism; UMP biosynthesis via de novo pathway; UMP from orotate: step 2/2. This Kluyveromyces marxianus (Yeast) protein is Orotidine 5'-phosphate decarboxylase (URA3).